We begin with the raw amino-acid sequence, 81 residues long: Large ribosomal subunit protein bL31 (81 aa).

It belongs to the bacterial ribosomal protein bL31 family. Type A subfamily. Part of the 50S ribosomal subunit.

Functionally, binds the 23S rRNA. In Synechocystis sp. (strain ATCC 27184 / PCC 6803 / Kazusa), this protein is Large ribosomal subunit protein bL31.